Here is a 162-residue protein sequence, read N- to C-terminus: N5-carboxyaminoimidazole ribonucleotide mutase (162 aa).

3 residues coordinate substrate: Ser11, Asp14, and Arg41.

The protein belongs to the AIR carboxylase family. Class I subfamily.

The catalysed reaction is 5-carboxyamino-1-(5-phospho-D-ribosyl)imidazole + H(+) = 5-amino-1-(5-phospho-D-ribosyl)imidazole-4-carboxylate. The protein operates within purine metabolism; IMP biosynthesis via de novo pathway; 5-amino-1-(5-phospho-D-ribosyl)imidazole-4-carboxylate from 5-amino-1-(5-phospho-D-ribosyl)imidazole (N5-CAIR route): step 2/2. In terms of biological role, catalyzes the conversion of N5-carboxyaminoimidazole ribonucleotide (N5-CAIR) to 4-carboxy-5-aminoimidazole ribonucleotide (CAIR). The sequence is that of N5-carboxyaminoimidazole ribonucleotide mutase from Bacillus subtilis (strain 168).